We begin with the raw amino-acid sequence, 261 residues long: Vacuolar protein sorting-associated protein 37D (261 aa).

One can recognise a VPS37 C-terminal domain in the interval 93–182; the sequence is AENCADKLQR…RRRERSAQPA (90 aa). The interval 172-261 is disordered; it reads LRRRERSAQP…RPSQPEPPHR (90 aa). Over residues 181 to 195 the composition is skewed to low complexity; sequence PAPTTAAAAAAAATA. Pro residues-rich tracts occupy residues 215–224 and 231–261; these read GPPPAVPRSL and PVPP…PPHR.

Belongs to the VPS37 family. Component of the ESCRT-I complex (endosomal sorting complex required for transport I) which consists of TSG101, VPS28, a VPS37 protein (VPS37A to -D) and MVB12A or MVB12B in a 1:1:1:1 stoichiometry. Interacts with TSG101 and MVB12A. Component of the ESCRT-I complex (endosomal sorting complex required for transport I) which consists of TSG101, VPS28, a VPS37 protein (VPS37A to -D) and UBAP1 in a 1:1:1:1 stoichiometry.

Its subcellular location is the late endosome membrane. Functionally, component of the ESCRT-I complex, a regulator of vesicular trafficking process. Required for the sorting of endocytic ubiquitinated cargos into multivesicular bodies. May be involved in cell growth and differentiation. The chain is Vacuolar protein sorting-associated protein 37D from Mus musculus (Mouse).